A 380-amino-acid chain; its full sequence is MAPNIRKSHPLLKMINNSLIDLPAPSNISAWWNFGSLLAVCLATQIITGLLLAMHYTADTSLAFSSVAHTCRNVQYGWLIRNLHANGASFFFICIFLHIGRGLYYGSYLYKETWNTGVVLLLTLMATAFVGYVLPWGQMSFWGATVITNLFSAIPYIGQTLVEWAWGGFSVDNPTLTRFFALHFLLPFVIAGITIIHLTFLHESGSNNPLGISSNSDKIPFHPYYSLKDILGLTLMFIPFLTLALFSPNLLGDPENFTPANPLVTPPHIKPEWYFLFAYAILRSIPNKLGGVLALAASVLILLLIPFLHKSKQRTMTFRPLSQILFWLLVANLLILTWIGSQPVEHPFIIIGQMASFSYFSILLILFPAIGTLENKMLNH.

Helical transmembrane passes span 34–54 (FGSLLAVCLATQIITGLLLAM), 78–99 (WLIRNLHANGASFFFICIFLHI), 114–134 (WNTGVVLLLTLMATAFVGYVL), and 179–199 (FFALHFLLPFVIAGITIIHLT). 2 residues coordinate heme b: H84 and H98. 2 residues coordinate heme b: H183 and H197. H202 is an a ubiquinone binding site. The next 4 membrane-spanning stretches (helical) occupy residues 227 to 247 (LKDILGLTLMFIPFLTLALFS), 289 to 309 (LGGVLALAASVLILLLIPFLH), 321 to 341 (LSQILFWLLVANLLILTWIGS), and 348 to 368 (FIIIGQMASFSYFSILLILFP).

Belongs to the cytochrome b family. As to quaternary structure, the cytochrome bc1 complex contains 11 subunits: 3 respiratory subunits (MT-CYB, CYC1 and UQCRFS1), 2 core proteins (UQCRC1 and UQCRC2) and 6 low-molecular weight proteins (UQCRH/QCR6, UQCRB/QCR7, UQCRQ/QCR8, UQCR10/QCR9, UQCR11/QCR10 and a cleavage product of UQCRFS1). This cytochrome bc1 complex then forms a dimer. Requires heme b as cofactor.

It is found in the mitochondrion inner membrane. Its function is as follows. Component of the ubiquinol-cytochrome c reductase complex (complex III or cytochrome b-c1 complex) that is part of the mitochondrial respiratory chain. The b-c1 complex mediates electron transfer from ubiquinol to cytochrome c. Contributes to the generation of a proton gradient across the mitochondrial membrane that is then used for ATP synthesis. This chain is Cytochrome b (MT-CYB), found in Pavo muticus (Green peafowl).